Here is a 541-residue protein sequence, read N- to C-terminus: Sorting nexin-27 (541 aa).

Residues 1-42 form a disordered region; that stretch reads MADEDGEGIHPSAPHRNGGGGGGGGSGLHCAGNGGGGGGGPR. Gly residues predominate over residues 17–41; the sequence is NGGGGGGGGSGLHCAGNGGGGGGGP. Residues 43–136 enclose the PDZ domain; the sequence is VVRIVKSESG…ELILTVLSVP (94 aa). Serine 51 and serine 62 each carry phosphoserine. Residues 161-269 form the PX domain; that stretch reads QAVPISVPRY…EFLSESDENY (109 aa). The Ras-associating domain maps to 273–362; that stretch reads SDVELRVALP…TCLTIRKWLF (90 aa). The FERM-like region F1 stretch occupies residues 273 to 362; that stretch reads SDVELRVALP…TCLTIRKWLF (90 aa). Residues 373–421 are FERM-like region F2; that stretch reads NDLAVTYFFHQAVDDVKKGYIKAEEKSYQLQKLYEQRKMVMYLNMLRTC. The segment at 425–525 is FERM-like region F3; it reads NEIIFPHCAC…RVFCELKWRK (101 aa).

Belongs to the sorting nexin family. In terms of assembly, core component of the SNX27-retromer, a multiprotein complex composed of SNX27, the WASH complex and the retromer complex. Interacts (via PDZ domain) with a number of target transmembrane proteins (via PDZ-binding motif): ABCC4, ADRB2, ARHGEF7, GRIA1, GRIA2, GRIN1, GRIN2A GRIN2C, KCNJ6, KCNJ9 and SLC2A1/GLUT1. Interacts (via the FERM-like regions) with the WASH complex. Interacts with SNX1. Interacts with CYTIP. Isoform 1 and isoform 2 directly interact with DGKZ. Isoform 1 and isoform 2 interact with HT4R isoform 5-HTA(A). Interacts with MCC. Interacts (via PDZ domains) with SLC9A3; directs SLC9A3 membrane insertion from early endosomes to the plasma membrane. As to expression, widely expressed. Expressed in cells of hematopoietic origin (at protein level).

The protein resides in the early endosome membrane. Its subcellular location is the cytoplasm. It localises to the cytosol. Involved in the retrograde transport from endosome to plasma membrane, a trafficking pathway that promotes the recycling of internalized transmembrane proteins. Following internalization, endocytosed transmembrane proteins are delivered to early endosomes and recycled to the plasma membrane instead of being degraded in lysosomes. SNX27 specifically binds and directs sorting of a subset of transmembrane proteins containing a PDZ-binding motif at the C-terminus: following interaction with target transmembrane proteins, associates with the retromer complex, preventing entry into the lysosomal pathway, and promotes retromer-tubule based plasma membrane recycling. SNX27 also binds with the WASH complex. Interacts with membranes containing phosphatidylinositol-3-phosphate (PtdIns(3P)). May participate in establishment of natural killer cell polarity. Recruits CYTIP to early endosomes. The chain is Sorting nexin-27 (SNX27) from Homo sapiens (Human).